Reading from the N-terminus, the 125-residue chain is Large ribosomal subunit protein bL12 (125 aa).

It belongs to the bacterial ribosomal protein bL12 family. In terms of assembly, homodimer. Part of the ribosomal stalk of the 50S ribosomal subunit. Forms a multimeric L10(L12)X complex, where L10 forms an elongated spine to which 2 to 4 L12 dimers bind in a sequential fashion. Binds GTP-bound translation factors.

Functionally, forms part of the ribosomal stalk which helps the ribosome interact with GTP-bound translation factors. Is thus essential for accurate translation. The polypeptide is Large ribosomal subunit protein bL12 (Coprothermobacter proteolyticus (strain ATCC 35245 / DSM 5265 / OCM 4 / BT)).